The sequence spans 404 residues: Indole-3-acetate O-methyltransferase 1 (404 aa).

S-adenosyl-L-methionine is bound by residues 82–83 (GC), Asn-88, Asp-120, 169–171 (TFY), and 186–188 (TFS). Positions 208, 212, 294, 295, 297, and 298 each coordinate Mg(2+).

The protein belongs to the methyltransferase superfamily. SABATH family. As to quaternary structure, homodimer. Mg(2+) serves as cofactor. As to expression, expressed in roots and panicles.

The catalysed reaction is (indol-3-yl)acetate + S-adenosyl-L-methionine = methyl (indol-3-yl)acetate + S-adenosyl-L-homocysteine. Catalyzes the methylation of the free carboxyl end of the plant hormone indole-3-acetic acid (IAA). Converts IAA to IAA methyl ester (MeIAA). Regulates IAA activities by IAA methylation. Methylation of IAA plays an important role in regulating plant development and auxin homeostasis. MeIAA seems to be an inactive form of IAA. The protein is Indole-3-acetate O-methyltransferase 1 (IAMT1) of Oryza sativa subsp. japonica (Rice).